We begin with the raw amino-acid sequence, 402 residues long: Tol-Pal system protein TolB (402 aa).

The N-terminal stretch at 1–17 (MKKIVAIFLVFLGSLWA) is a signal peptide.

This sequence belongs to the TolB family. The Tol-Pal system is composed of five core proteins: the inner membrane proteins TolA, TolQ and TolR, the periplasmic protein TolB and the outer membrane protein Pal. They form a network linking the inner and outer membranes and the peptidoglycan layer.

The protein localises to the periplasm. Its function is as follows. Part of the Tol-Pal system, which plays a role in outer membrane invagination during cell division and is important for maintaining outer membrane integrity. The protein is Tol-Pal system protein TolB of Campylobacter jejuni subsp. jejuni serotype O:2 (strain ATCC 700819 / NCTC 11168).